We begin with the raw amino-acid sequence, 427 residues long: Mitogen-activated protein kinase 8B (427 aa).

Positions 26–321 (YQNLRPIGSG…VDEALQHPYI (296 aa)) constitute a Protein kinase domain. ATP contacts are provided by residues 33–40 (GSGAQGIV) and Lys-55. Asp-151 functions as the Proton acceptor in the catalytic mechanism. Thr-183 carries the phosphothreonine modification. The TXY signature appears at 183-185 (TPY). Tyr-185 carries the phosphotyrosine modification. Positions 372 to 427 (IRGQPSPIGAAVINGSPQPSSSSSINDVSSMSTEPTVASDTDSSLEASAGPLSCCR) are disordered. Positions 387 to 403 (SPQPSSSSSINDVSSMS) are enriched in low complexity. Positions 404–417 (TEPTVASDTDSSLE) are enriched in polar residues.

Belongs to the protein kinase superfamily. CMGC Ser/Thr protein kinase family. MAP kinase subfamily. Requires Mg(2+) as cofactor. In terms of processing, dually phosphorylated on Thr-183 and Tyr-185, which activates the enzyme. As to expression, expressed at high levels in the ovary and at lower levels in brain, gill, heart, spleen, liver, kidney, muscle, bladder and gut.

It catalyses the reaction L-seryl-[protein] + ATP = O-phospho-L-seryl-[protein] + ADP + H(+). The enzyme catalyses L-threonyl-[protein] + ATP = O-phospho-L-threonyl-[protein] + ADP + H(+). Its activity is regulated as follows. Activated by threonine and tyrosine phosphorylation. In terms of biological role, responds to activation by environmental stress and pro-inflammatory cytokines by phosphorylating a number of transcription factors, primarily components of AP-1 such as c-Jun and ATF2 and thus regulates AP-1 transcriptional activity. May play a role in the regulation of the circadian clock. The protein is Mitogen-activated protein kinase 8B (mapk8b) of Cyprinus carpio (Common carp).